We begin with the raw amino-acid sequence, 466 residues long: ATP synthase subunit beta (466 aa).

An ATP-binding site is contributed by 148-155; that stretch reads GGAGVGKT.

It belongs to the ATPase alpha/beta chains family. F-type ATPases have 2 components, CF(1) - the catalytic core - and CF(0) - the membrane proton channel. CF(1) has five subunits: alpha(3), beta(3), gamma(1), delta(1), epsilon(1). CF(0) has three main subunits: a(1), b(2) and c(9-12). The alpha and beta chains form an alternating ring which encloses part of the gamma chain. CF(1) is attached to CF(0) by a central stalk formed by the gamma and epsilon chains, while a peripheral stalk is formed by the delta and b chains.

It localises to the cell inner membrane. It catalyses the reaction ATP + H2O + 4 H(+)(in) = ADP + phosphate + 5 H(+)(out). Functionally, produces ATP from ADP in the presence of a proton gradient across the membrane. The catalytic sites are hosted primarily by the beta subunits. In Xylella fastidiosa (strain M12), this protein is ATP synthase subunit beta.